The primary structure comprises 357 residues: Uroporphyrinogen decarboxylase (357 aa).

Residues 34–38 (RQAGR), D83, Y158, S213, and H336 contribute to the substrate site.

Belongs to the uroporphyrinogen decarboxylase family. Homodimer.

The protein resides in the cytoplasm. The enzyme catalyses uroporphyrinogen III + 4 H(+) = coproporphyrinogen III + 4 CO2. It participates in porphyrin-containing compound metabolism; protoporphyrin-IX biosynthesis; coproporphyrinogen-III from 5-aminolevulinate: step 4/4. In terms of biological role, catalyzes the decarboxylation of four acetate groups of uroporphyrinogen-III to yield coproporphyrinogen-III. The protein is Uroporphyrinogen decarboxylase of Mycolicibacterium paratuberculosis (strain ATCC BAA-968 / K-10) (Mycobacterium paratuberculosis).